The sequence spans 300 residues: Probable alpha-L-glutamate ligase (300 aa).

The 184-residue stretch at 104–287 folds into the ATP-grasp domain; the sequence is LQLLARQGID…IAGRMIQWIE (184 aa). ATP-binding positions include K141, 178–179, D187, and 211–213; these read EY and RSN. D248, E260, and N262 together coordinate Mg(2+). Residues D248, E260, and N262 each contribute to the Mn(2+) site.

This sequence belongs to the RimK family. Mg(2+) serves as cofactor. It depends on Mn(2+) as a cofactor.

In Citrobacter koseri (strain ATCC BAA-895 / CDC 4225-83 / SGSC4696), this protein is Probable alpha-L-glutamate ligase.